The sequence spans 408 residues: Acetate kinase (408 aa).

Residue Asn-10 coordinates Mg(2+). Lys-17 lines the ATP pocket. Arg-96 is a binding site for substrate. Asp-153 (proton donor/acceptor) is an active-site residue. ATP-binding positions include 213-217 (HLGNG) and 288-290 (DLR). Mg(2+) is bound at residue Glu-393.

Belongs to the acetokinase family. Homodimer. It depends on Mg(2+) as a cofactor. The cofactor is Mn(2+).

The protein localises to the cytoplasm. It catalyses the reaction acetate + ATP = acetyl phosphate + ADP. Its pathway is metabolic intermediate biosynthesis; acetyl-CoA biosynthesis; acetyl-CoA from acetate: step 1/2. Catalyzes the formation of acetyl phosphate from acetate and ATP. Can also catalyze the reverse reaction. The sequence is that of Acetate kinase from Borrelia duttonii (strain Ly).